A 201-amino-acid polypeptide reads, in one-letter code: Putative ferritin heavy polypeptide-like 19 (201 aa).

A Ferritin-like diiron domain is found at 1–123 (MAFYFDQDDA…GYLSNLHKMG (123 aa)).

Belongs to the ferritin family.

The chain is Putative ferritin heavy polypeptide-like 19 (FTH1P19) from Homo sapiens (Human).